The following is a 182-amino-acid chain: Oligoribonuclease (182 aa).

Residues 7–170 (LIWIDLEMTG…EDIRESVEEL (164 aa)) form the Exonuclease domain. Y128 is an active-site residue.

This sequence belongs to the oligoribonuclease family.

It is found in the cytoplasm. 3'-to-5' exoribonuclease specific for small oligoribonucleotides. This chain is Oligoribonuclease, found in Hahella chejuensis (strain KCTC 2396).